A 319-amino-acid chain; its full sequence is Cytochrome f (319 aa).

A signal peptide spans 1 to 35; it reads MFQQMQKISLKLLKTTFLFLFATFILVGLPSTSQA. Heme is bound by residues Tyr36, Cys56, Cys59, and His60. Residues 285 to 305 traverse the membrane as a helical segment; sequence IQGLIAFFISVIIAQTFLVLK.

It belongs to the cytochrome f family. The 4 large subunits of the cytochrome b6-f complex are cytochrome b6, subunit IV (17 kDa polypeptide, petD), cytochrome f and the Rieske protein, while the 4 small subunits are PetG, PetL, PetM and PetN. The complex functions as a dimer. It depends on heme as a cofactor.

The protein localises to the plastid. It is found in the chloroplast thylakoid membrane. Component of the cytochrome b6-f complex, which mediates electron transfer between photosystem II (PSII) and photosystem I (PSI), cyclic electron flow around PSI, and state transitions. This Chlorokybus atmophyticus (Soil alga) protein is Cytochrome f.